We begin with the raw amino-acid sequence, 201 residues long: Small ribosomal subunit protein uS4 (201 aa).

The S4 RNA-binding domain maps to 91 to 157; the sequence is SRLDNVIYRA…VPFQIARETA (67 aa).

The protein belongs to the universal ribosomal protein uS4 family. As to quaternary structure, part of the 30S ribosomal subunit. Contacts protein S5. The interaction surface between S4 and S5 is involved in control of translational fidelity.

In terms of biological role, one of the primary rRNA binding proteins, it binds directly to 16S rRNA where it nucleates assembly of the body of the 30S subunit. With S5 and S12 plays an important role in translational accuracy. This Mycobacterium tuberculosis (strain ATCC 25177 / H37Ra) protein is Small ribosomal subunit protein uS4.